We begin with the raw amino-acid sequence, 501 residues long: NAD(P)H-quinone oxidoreductase chain 4, chloroplastic (501 aa).

Transmembrane regions (helical) follow at residues 5–25 (FPWL…IFFL), 38–58 (TCIC…HFQL), 88–108 (IGPI…AWPV), 114–131 (LFYL…GLFS), 135–155 (LLLF…LLSM), 168–188 (FILY…GMGL), 209–229 (ALEI…SPII), 243–263 (HYST…YGLI), 273–293 (AHSL…IYAA), 306–326 (IACS…SITD), 331–351 (GAIL…FLSG), 387–407 (LALP…GIIT), 417–437 (ILIT…LLSM), and 464–484 (FVSI…DCVF).

It belongs to the complex I subunit 4 family.

It is found in the plastid. The protein localises to the chloroplast thylakoid membrane. It catalyses the reaction a plastoquinone + NADH + (n+1) H(+)(in) = a plastoquinol + NAD(+) + n H(+)(out). The catalysed reaction is a plastoquinone + NADPH + (n+1) H(+)(in) = a plastoquinol + NADP(+) + n H(+)(out). In Dioscorea elephantipes (Elephant's foot yam), this protein is NAD(P)H-quinone oxidoreductase chain 4, chloroplastic.